Reading from the N-terminus, the 182-residue chain is ATP synthase subunit delta 2 (182 aa).

It belongs to the ATPase delta chain family. In terms of assembly, F-type ATPases have 2 components, F(1) - the catalytic core - and F(0) - the membrane proton channel. F(1) has five subunits: alpha(3), beta(3), gamma(1), delta(1), epsilon(1). F(0) has three main subunits: a(1), b(2) and c(10-14). The alpha and beta chains form an alternating ring which encloses part of the gamma chain. F(1) is attached to F(0) by a central stalk formed by the gamma and epsilon chains, while a peripheral stalk is formed by the delta and b chains.

Its subcellular location is the cell inner membrane. Its function is as follows. F(1)F(0) ATP synthase produces ATP from ADP in the presence of a proton or sodium gradient. F-type ATPases consist of two structural domains, F(1) containing the extramembraneous catalytic core and F(0) containing the membrane proton channel, linked together by a central stalk and a peripheral stalk. During catalysis, ATP synthesis in the catalytic domain of F(1) is coupled via a rotary mechanism of the central stalk subunits to proton translocation. This protein is part of the stalk that links CF(0) to CF(1). It either transmits conformational changes from CF(0) to CF(1) or is implicated in proton conduction. This chain is ATP synthase subunit delta 2, found in Photobacterium profundum (strain SS9).